Reading from the N-terminus, the 88-residue chain is Large ribosomal subunit protein bL27 (88 aa).

The protein belongs to the bacterial ribosomal protein bL27 family.

The protein is Large ribosomal subunit protein bL27 of Parabacteroides distasonis (strain ATCC 8503 / DSM 20701 / CIP 104284 / JCM 5825 / NCTC 11152).